A 1480-amino-acid chain; its full sequence is Cystic fibrosis transmembrane conductance regulator (1480 aa).

Residues 1–77 (MQRSPLEKAS…KLINALRRCF (77 aa)) lie on the Cytoplasmic side of the membrane. A helical transmembrane segment spans residues 78-98 (FWRFMFYGIFLYLGEVTKAVQ). The region spanning 81-365 (FMFYGIFLYL…WAVQTWYDSL (285 aa)) is the ABC transmembrane type-1 1 domain. At 99–122 (PLLLGRIIASYDPDNKEERSIAIY) the chain is on the extracellular side. The chain crosses the membrane as a helical span at residues 123–146 (LGIGLCLLFIVRTLLLHPAIFGLH). Residues 147 to 195 (HIGMQMRIAMFSLIYKKTLKLSSRVLDKISIGQLVSLLSNNLNKFDEGL) are Cytoplasmic-facing. The chain crosses the membrane as a helical span at residues 196–216 (ALAHFVWIAPLQVALLMGLIW). Over 217–222 (ELLQAS) the chain is Extracellular. A helical membrane pass occupies residues 223-243 (AFCGLGFLIVLALFQAGLGRM). Residues 244–298 (MMKYRDQRAGKISERLVITSEMIENIQSVKAYCWEEAMEKMIENLRQTELKLTRK) lie on the Cytoplasmic side of the membrane. A helical transmembrane segment spans residues 299-319 (AAYVRYFNSSAFFFSGFFVVF). Over 320 to 339 (LSVLPYALIKGIILRKIFTT) the chain is Extracellular. Residues 340–358 (ISFCIVLRMAVTRQFPWAV) traverse the membrane as a helical segment. Over 359–858 (QTWYDSLGAI…YLRYITVHKS (500 aa)) the chain is Cytoplasmic. ATP contacts are provided by residues Trp401, Ser434, 458–465 (GSTGAGKT), and Gln493. Residues 423–646 (NGDDSLFFSN…RPDFSSKLMG (224 aa)) form the ABC transporter 1 domain. Cys524 is lipidated: S-palmitoyl cysteine. 2 positions are modified to phosphoserine: Ser549 and Ser660. The tract at residues 654–831 (SAERRNSILT…EEINEEDLKE (178 aa)) is disordered R region. Ser670 bears the Phosphoserine; by PKA mark. The residue at position 686 (Ser686) is a Phosphoserine. Lys688 participates in a covalent cross-link: Glycyl lysine isopeptide (Lys-Gly) (interchain with G-Cter in ubiquitin). 2 positions are modified to phosphoserine: Ser700 and Ser712. Thr717 carries the phosphothreonine modification. Ser737, Ser753, Ser768, Ser790, Ser795, and Ser813 each carry phosphoserine. Residues 859 to 879 (LIFVLIWCLVIFLAEVAASLV) traverse the membrane as a helical segment. The ABC transmembrane type-1 2 domain maps to 859–1155 (LIFVLIWCLV…AVNSSIDVDS (297 aa)). Residues 880 to 918 (VLWLLGNTPLQDKGNSTHSRNNSYAVIITSTSSYYVFYI) are Extracellular-facing. 2 N-linked (GlcNAc...) asparagine glycosylation sites follow: Asn894 and Asn900. A discontinuously helical transmembrane segment spans residues 919 to 939 (YVGVADTLLAMGFFRGLPLVH). Topologically, residues 940–990 (TLITVSKILHHKMLHSVLQAPMSTLNTLKAGGILNRFSKDIAILDDLLPLT) are cytoplasmic. Residues 991 to 1011 (IFDFIQLLLIVIGAIAVVAVL) traverse the membrane as a helical segment. Topologically, residues 1012 to 1013 (QP) are extracellular. The chain crosses the membrane as a helical span at residues 1014–1034 (YIFVATVPVIVAFIMLRAYFL). At 1035–1095 (QTSQQLKQLE…TANWFLYLST (61 aa)) the chain is on the cytoplasmic side. The chain crosses the membrane as a helical span at residues 1096–1116 (LRWFQMRIEMIFVIFFIAVTF). At 1117–1130 (ISILTTGEGEGRVG) the chain is on the extracellular side. A helical membrane pass occupies residues 1131–1151 (IILTLAMNIMSTLQWAVNSSI). The Cytoplasmic segment spans residues 1152–1480 (DVDSLMRSVS…TEEEVQDTRL (329 aa)). Residues 1210 to 1443 (MTVKDLTAKY…RSLFRQAISP (234 aa)) enclose the ABC transporter 2 domain. Residues Tyr1219 and 1244–1251 (GRTGSGKS) each bind ATP. Positions 1386–1480 (RTLKQAFADC…TEEEVQDTRL (95 aa)) are interaction with GORASP2. Cys1395 carries the S-palmitoyl cysteine lipid modification. A phosphoserine mark is found at Ser1444 and Ser1456. The tract at residues 1452–1480 (HRNSSKCKSKPQIAALKEETEEEVQDTRL) is disordered. The span at 1470-1480 (ETEEEVQDTRL) shows a compositional bias: acidic residues. The PDZ-binding signature appears at 1478–1480 (TRL).

The protein belongs to the ABC transporter superfamily. ABCC family. CFTR transporter (TC 3.A.1.202) subfamily. In terms of assembly, monomer; does not require oligomerization for channel activity. May form oligomers in the membrane. Interacts with SLC26A3, SLC26A6 and NHERF1. Interacts with SHANK2. Interacts with MYO6. Interacts (via C-terminus) with GOPC (via PDZ domain); this promotes CFTR internalization and thereby decreases channel activity. Interacts with SLC4A7 through NHERF1. Found in a complex with MYO5B and RAB11A. Interacts with ANO1. Interacts with SLC26A8. Interacts with AHCYL1; the interaction increases CFTR activity. Interacts with CSE1L. The core-glycosylated form interacts with GORASP2 (via PDZ GRASP-type 1 domain) in respone to ER stress. Interacts with MARCHF2; the interaction leads to CFTR ubiqtuitination and degradation. Interacts with ADGRG2. Post-translationally, N-glycosylated. Phosphorylated; cAMP treatment promotes phosphorylation and activates the channel. Dephosphorylation decreases the ATPase activity (in vitro). Phosphorylation at PKA sites activates the channel. Phosphorylation at PKC sites enhances the response to phosphorylation by PKA. Phosphorylated by AMPK; this inhibits channel activity. In terms of processing, ubiquitinated, leading to its degradation in the lysosome. Deubiquitination by USP10 in early endosomes enhances its endocytic recycling to the cell membrane. Ubiquitinated by RNF185 during ER stress. Ubiquitinated by MARCHF2.

It localises to the apical cell membrane. The protein resides in the early endosome membrane. Its subcellular location is the cell membrane. It is found in the recycling endosome membrane. The protein localises to the endoplasmic reticulum membrane. It localises to the nucleus. The catalysed reaction is ATP + H2O + closed Cl(-) channel = ADP + phosphate + open Cl(-) channel.. It carries out the reaction chloride(in) = chloride(out). The enzyme catalyses hydrogencarbonate(in) = hydrogencarbonate(out). It catalyses the reaction ATP + H2O = ADP + phosphate + H(+). Functionally, epithelial ion channel that plays an important role in the regulation of epithelial ion and water transport and fluid homeostasis. Mediates the transport of chloride ions across the cell membrane. Possesses an intrinsic ATPase activity and utilizes ATP to gate its channel; the passive flow of anions through the channel is gated by cycles of ATP binding and hydrolysis by the ATP-binding domains. The ion channel is also permeable to HCO(3)(-); selectivity depends on the extracellular chloride concentration. Exerts its function also by modulating the activity of other ion channels and transporters. Contributes to the regulation of the pH and the ion content of the epithelial fluid layer. Modulates the activity of the epithelial sodium channel (ENaC) complex, in part by regulating the cell surface expression of the ENaC complex. May regulate bicarbonate secretion and salvage in epithelial cells by regulating the transporter SLC4A7. Can inhibit the chloride channel activity of ANO1. Plays a role in the chloride and bicarbonate homeostasis during sperm epididymal maturation and capacitation. The protein is Cystic fibrosis transmembrane conductance regulator of Pan troglodytes (Chimpanzee).